We begin with the raw amino-acid sequence, 162 residues long: Putative 4-hydroxy-4-methyl-2-oxoglutarate aldolase (162 aa).

Substrate contacts are provided by residues 75–78 and Arg97; that span reads GDML. Position 98 (Asp98) interacts with a divalent metal cation.

The protein belongs to the class II aldolase/RraA-like family. In terms of assembly, homotrimer. It depends on a divalent metal cation as a cofactor.

The catalysed reaction is 4-hydroxy-4-methyl-2-oxoglutarate = 2 pyruvate. It catalyses the reaction oxaloacetate + H(+) = pyruvate + CO2. In terms of biological role, catalyzes the aldol cleavage of 4-hydroxy-4-methyl-2-oxoglutarate (HMG) into 2 molecules of pyruvate. Also contains a secondary oxaloacetate (OAA) decarboxylase activity due to the common pyruvate enolate transition state formed following C-C bond cleavage in the retro-aldol and decarboxylation reactions. The chain is Putative 4-hydroxy-4-methyl-2-oxoglutarate aldolase from Azotobacter vinelandii (strain DJ / ATCC BAA-1303).